Reading from the N-terminus, the 256-residue chain is N-acetylglucosaminyldiphosphoundecaprenol N-acetyl-beta-D-mannosaminyltransferase (256 aa).

The protein belongs to the glycosyltransferase 26 family. TagA/TarA subfamily.

The enzyme catalyses UDP-N-acetyl-alpha-D-mannosamine + N-acetyl-alpha-D-glucosaminyl-di-trans,octa-cis-undecaprenyl diphosphate = N-acetyl-beta-D-mannosaminyl-(1-&gt;4)-N-acetyl-alpha-D-glucosaminyl di-trans,octa-cis-undecaprenyl diphosphate + UDP + H(+). It functions in the pathway cell wall biogenesis; poly(glycerol phosphate) teichoic acid biosynthesis. Its function is as follows. Catalyzes the conversion of GlcNAc-PP-undecaprenol into ManNAc-GlcNAc-PP-undecaprenol, the first committed lipid intermediate in the de novo synthesis of teichoic acid. The polypeptide is N-acetylglucosaminyldiphosphoundecaprenol N-acetyl-beta-D-mannosaminyltransferase (Bacillus subtilis (strain 168)).